Reading from the N-terminus, the 265-residue chain is 5'-nucleotidase SurE (265 aa).

The a divalent metal cation site is built by D8, D9, S39, and N96.

It belongs to the SurE nucleotidase family. A divalent metal cation is required as a cofactor.

The protein localises to the cytoplasm. The enzyme catalyses a ribonucleoside 5'-phosphate + H2O = a ribonucleoside + phosphate. Nucleotidase that shows phosphatase activity on nucleoside 5'-monophosphates. The protein is 5'-nucleotidase SurE of Dehalococcoides mccartyi (strain ATCC BAA-2266 / KCTC 15142 / 195) (Dehalococcoides ethenogenes (strain 195)).